Consider the following 205-residue polypeptide: uncharacterized protein (205 aa).

Topologically, residues 1 to 63 are cytoplasmic; that stretch reads MQRTRELESS…QHPKVAKFLK (63 aa). A helical membrane pass occupies residues 64 to 84; sequence VQLVFDLISLFIFATHQLLLL. The Extracellular portion of the chain corresponds to 85–124; the sequence is EDGNFGKHYFKRKTKRCSKFSCSRCNANAHHPKWFKFKHS. The helical transmembrane segment at 125–145 threads the bilayer; sequence LLCLGTFCFGVYSLVKINKFF. The Cytoplasmic portion of the chain corresponds to 146–205; sequence KTDQTVDLNRLLELFFWQLNAILNMKLFAFYGDHLESHSAPLDVYEDSFANKSSSGGDEV.

It is found in the membrane. This is an uncharacterized protein from Saccharomyces cerevisiae (strain ATCC 204508 / S288c) (Baker's yeast).